We begin with the raw amino-acid sequence, 448 residues long: Probable glycine dehydrogenase (decarboxylating) subunit 1 (448 aa).

Belongs to the GcvP family. N-terminal subunit subfamily. The glycine cleavage system is composed of four proteins: P, T, L and H. In this organism, the P 'protein' is a heterodimer of two subunits.

The catalysed reaction is N(6)-[(R)-lipoyl]-L-lysyl-[glycine-cleavage complex H protein] + glycine + H(+) = N(6)-[(R)-S(8)-aminomethyldihydrolipoyl]-L-lysyl-[glycine-cleavage complex H protein] + CO2. The glycine cleavage system catalyzes the degradation of glycine. The P protein binds the alpha-amino group of glycine through its pyridoxal phosphate cofactor; CO(2) is released and the remaining methylamine moiety is then transferred to the lipoamide cofactor of the H protein. This is Probable glycine dehydrogenase (decarboxylating) subunit 1 from Staphylococcus epidermidis (strain ATCC 35984 / DSM 28319 / BCRC 17069 / CCUG 31568 / BM 3577 / RP62A).